Reading from the N-terminus, the 370-residue chain is Anhydro-N-acetylmuramic acid kinase (370 aa).

G12 to D19 serves as a coordination point for ATP.

The protein belongs to the anhydro-N-acetylmuramic acid kinase family.

It carries out the reaction 1,6-anhydro-N-acetyl-beta-muramate + ATP + H2O = N-acetyl-D-muramate 6-phosphate + ADP + H(+). It participates in amino-sugar metabolism; 1,6-anhydro-N-acetylmuramate degradation. The protein operates within cell wall biogenesis; peptidoglycan recycling. In terms of biological role, catalyzes the specific phosphorylation of 1,6-anhydro-N-acetylmuramic acid (anhMurNAc) with the simultaneous cleavage of the 1,6-anhydro ring, generating MurNAc-6-P. Is required for the utilization of anhMurNAc either imported from the medium or derived from its own cell wall murein, and thus plays a role in cell wall recycling. This is Anhydro-N-acetylmuramic acid kinase from Pectobacterium atrosepticum (strain SCRI 1043 / ATCC BAA-672) (Erwinia carotovora subsp. atroseptica).